Consider the following 783-residue polypeptide: Flavin carrier protein 2 (783 aa).

The signal sequence occupies residues 1-22 (MIFLNTFARCLLTCFVLCSGTA). Over 23–182 (RSSDTNDTTP…NGKTVQTKYA (160 aa)) the chain is Lumenal. 4 N-linked (GlcNAc...) asparagine glycosylation sites follow: N28, N65, N81, and N156. The helical transmembrane segment at 183-203 (AWPIAAISGVGVLTSGFVSVI) threads the bilayer. At 204 to 211 (GYSATAAH) the chain is on the cytoplasmic side. A helical transmembrane segment spans residues 212-232 (IASNSISLFIYFQNLAITAMM). Topologically, residues 233-347 (GVSRVPPIAA…AYLANIELSN (115 aa)) are lumenal. N-linked (GlcNAc...) asparagine glycosylation is present at N323. The helical transmembrane segment at 348-368 (FFLTGIVFFLFFLFVVVVSLI) threads the bilayer. At 369–402 (FFKALLEVLTRARILKETSNFFQYRKNWGSIIKG) the chain is on the cytoplasmic side. The chain crosses the membrane as a helical span at residues 403-423 (TLFRLSIIAFPQVSLLAIWEF). Over 424–430 (TQVNSPA) the chain is Lumenal. Residues 431-451 (IVVDAVVILLIITGLLVYGTI) form a helical membrane-spanning segment. Over 452 to 492 (RVFIKGRESLRLYKNPAYLLYSDTYFLNKFGFLYVQFKADK) the chain is Cytoplasmic. The helical transmembrane segment at 493–513 (FWWLLPLLSYAFLRSLFVAVL) threads the bilayer. The Lumenal portion of the chain corresponds to 514–521 (QNQGKAQA). Residues 522–542 (MIIFVIELAYFVCLCWIRPYL) form a helical membrane-spanning segment. Residues 543 to 547 (DKRTN) are Cytoplasmic-facing. A helical transmembrane segment spans residues 548 to 568 (VFNIAIHLVNLINAFFFLFFS). At 569–581 (NLFKQPAVVSSVM) the chain is on the lumenal side. A helical membrane pass occupies residues 582–602 (AVILFVLNAVFALFLLLFTIV). Over 603 to 783 (TCTLALLHRN…ENARNNNPYL (181 aa)) the chain is Cytoplasmic. The segment at 681–783 (RLFDDETSSS…ENARNNNPYL (103 aa)) is disordered. The segment covering 688 to 697 (SSSSFKQNSS) has biased composition (low complexity). Composition is skewed to polar residues over residues 704–748 (VTEQ…TSSL) and 756–767 (YLGNSNKSYSHF). Over residues 768–783 (NNNGSNENARNNNPYL) the composition is skewed to low complexity.

It belongs to the transient receptor potential (TRP) ion channel family.

It localises to the endoplasmic reticulum membrane. May be responsible for the transport of FAD into the endoplasmic reticulum lumen, where it is required for oxidative protein folding. In Saccharomyces cerevisiae (strain ATCC 204508 / S288c) (Baker's yeast), this protein is Flavin carrier protein 2 (FLC2).